A 521-amino-acid chain; its full sequence is Cytochrome P450 monooxygenase sdnF (521 aa).

A helical membrane pass occupies residues 19-39; that stretch reads YLGLLLSGTVLYTVYKLIIAI. 5 N-linked (GlcNAc...) asparagine glycosylation sites follow: Asn178, Asn186, Asn191, Asn309, and Asn416. Cys460 lines the heme pocket.

The protein belongs to the cytochrome P450 family. Heme serves as cofactor.

The protein resides in the membrane. The protein operates within antibiotic biosynthesis. Its function is as follows. Cytochrome P450 monooxygenase; part of the gene cluster that mediates the biosynthesis of sordarin and hypoxysordarin, glycoside antibiotics with a unique tetracyclic diterpene aglycone structure. First, the geranylgeranyl diphosphate synthase sdnC constructs GGDP from farnesyl diphosphate and isopentenyl diphosphate. The diterpene cyclase sdnA then catalyzes the cyclization of GGDP to afford cycloaraneosene. Cycloaraneosene is then hydroxylated four times by the putative cytochrome P450 monooxygenases sdnB, sdnE, sdnF and sdnH to give a hydroxylated cycloaraneosene derivative such as cycloaraneosene-8,9,13,19-tetraol. Although the order of the hydroxylations is unclear, at least C8, C9 and C13 of the cycloaraneosene skeleton are hydroxylated before the sordaricin formation. Dehydration of the 13-hydroxy group of the hydroxylated cycloaraneosene derivative might be catalyzed by an unassigned hypothetical protein such as sdnG and sdnP to construct the cyclopentadiene moiety. The FAD-dependent oxidoreductase sdnN is proposed to catalyze the oxidation at C9 of the hydroxylated cycloaraneosene derivative and also catalyze the Baeyer-Villiger oxidation to give the lactone intermediate. The presumed lactone intermediate would be hydrolyzed to give an acrolein moiety and a carboxylate moiety. Then, [4+2]cycloaddition would occur between the acrolein moiety and the cyclopentadiene moiety to give sordaricin. SdnN might also be involved in the [4+2]cycloaddition after the hypothesized oxidation to accommodate the oxidized product and prompt the [4+2]cycloaddition. GDP-6-deoxy-D-altrose may be biosynthesized from GDP-D-mannose by the putative GDP-mannose-4,6-dehydratase sdnI and the short-chain dehydrogenase sdnK. The glycosyltransferase sdnJ catalyzes the attachment of 6-deoxy-D-altrose onto the 19-hydroxy group of sordaricin to give 4'-O-demethylsordarin. The methyltransferase sdnD would complete the biosynthesis of sordarin. Sordarin can be further modified into hypoxysordarin. The unique acyl chain at the 3'-hydroxy group of hypoxysordarin would be constructed by an iterative type I PKS sdnO and the trans-acting polyketide methyltransferase sdnL. SdnL would be responsible for the introduction of an alpha-methyl group of the polyketide chain. Alternatively, the beta-lactamase-like protein sdnR might be responsible for the cleavage and transfer of the polyketide chain from the PKS sdnO to sordarin. Two putative cytochrome P450 monooxygenases, sdnQ and sdnT, might catalyze the epoxidations of the polyketide chain to complete the biosynthesis of hypoxysordarin. Transcriptional regulators sdnM and sdnS are presumably encoded for the transcriptional regulation of the expression of the sdn gene cluster. The chain is Cytochrome P450 monooxygenase sdnF from Sordaria araneosa (Pleurage araneosa).